We begin with the raw amino-acid sequence, 137 residues long: Histone H2B.1, sperm (137 aa).

A disordered region spans residues 1-43 (MPSQKSPTKRSPTKRSPQKGGKGAKRGGKAGKRRRGVAVKRRR). Short sequence motifs (SPKK motif) lie at residues 6–9 (SPTK), 11–14 (SPTK), and 16–19 (SPQK). The span at 7 to 43 (PTKRSPTKRSPQKGGKGAKRGGKAGKRRRGVAVKRRR) shows a compositional bias: basic residues. A phosphoserine mark is found at serine 11 and serine 16. Serine 124 carries an O-linked (GlcNAc) serine glycan. Lysine 132 is covalently cross-linked (Glycyl lysine isopeptide (Lys-Gly) (interchain with G-Cter in ubiquitin)).

It belongs to the histone H2B family. As to quaternary structure, the nucleosome is a histone octamer containing two molecules each of H2A, H2B, H3 and H4 assembled in one H3-H4 heterotetramer and two H2A-H2B heterodimers. The octamer wraps approximately 147 bp of DNA. Monoubiquitination of Lys-132 gives a specific tag for epigenetic transcriptional activation and is also prerequisite for histone H3 'Lys-4' and 'Lys-79' methylation. Post-translationally, phosphorylated on SPKK motifs 2 and 3; which may regulate DNA binding. Dephosphorylated during maturation of spermatids to mature sperm and rephosphorylated at fertilization. In terms of processing, glcNAcylation at Ser-124 promotes monoubiquitination of Lys-132. It fluctuates in response to extracellular glucose, and associates with transcribed genes.

It localises to the nucleus. Its subcellular location is the chromosome. Functionally, core component of nucleosome. Nucleosomes wrap and compact DNA into chromatin, limiting DNA accessibility to the cellular machineries which require DNA as a template. Histones thereby play a central role in transcription regulation, DNA repair, DNA replication and chromosomal stability. DNA accessibility is regulated via a complex set of post-translational modifications of histones, also called histone code, and nucleosome remodeling. The chain is Histone H2B.1, sperm from Psammechinus miliaris (Green sea urchin).